The primary structure comprises 118 residues: UPF0145 protein PTO0347 (118 aa).

Belongs to the UPF0145 family.

This chain is UPF0145 protein PTO0347, found in Picrophilus torridus (strain ATCC 700027 / DSM 9790 / JCM 10055 / NBRC 100828 / KAW 2/3).